The sequence spans 377 residues: 2-iminoacetate synthase (377 aa).

Positions 71–301 constitute a Radical SAM core domain; the sequence is NTVSFYVPLY…PEIELSLSTR (231 aa). Residues Cys-85, Cys-89, and Cys-92 each coordinate [4Fe-4S] cluster.

This sequence belongs to the radical SAM superfamily. ThiH family. In terms of assembly, forms a heterodimer with ThiG. The cofactor is [4Fe-4S] cluster.

The catalysed reaction is L-tyrosine + S-adenosyl-L-methionine + NADPH = 2-iminoacetate + 4-methylphenol + 5'-deoxyadenosine + L-methionine + NADP(+). The protein operates within cofactor biosynthesis; thiamine diphosphate biosynthesis. Functionally, catalyzes the radical-mediated cleavage of tyrosine to 2-iminoacetate and 4-cresol. In Escherichia coli (strain K12), this protein is 2-iminoacetate synthase (thiH).